A 909-amino-acid chain; its full sequence is MADPSQASFWAQANALLRKNLTYQRRHIWTNIRLVLVPLLLCLFLLGIQLLLDVVVNKAADLTKCGSQDDFSIGDCPIPNPPLLPPLLQIPEPESRAVSGGFFSYNDLPDKSCRKTGTCPVTILLTGNNHSLGQALSGNMFGGSFAVNSSDLLSSLAYNVLGSTLALGTNNYADPGIESDFPIYSIQSQCSPNSTWPLSFGKIHTAVTCLQGLSLWRNNSVEVNDELFKGNWKGNPERMTNEIAAAYDLLNTDRNNFDVTIWYNSTNIDDPSRAPLVRVPRLLNLVSNAYLKFLKGPGTRILFEFVKEVPKHQTKFNLDIASMLGPLFFTWVVLLLFPVILTSLVYEKQERLRIIMKMHGLGIGPYWMISYAYFLTLSMFYVISLVIFGSAIGLRYFRLNDYSVQFIFYFIFVNLQISFAFLASSIFSKVKTATVVAYTLVFASGLLGMFLFGELLESPTFPEKGILALELYPGFSLFRGLYEFAQYASRGNGMKWKDLKESGMDKLFYLMSVEWFVILIVAYSIDLLSSSGRSPFVFFKKSSSLPSPSVQRQNSENVLIDMEKTDVTQEREKVEKLRKEGTTGHAIVCDNLKKVYPGSDGNPPKLAVRGLYLDVPSGECFGMLGPNGAGKTSFINMMTGLLKPTSGTALVQGLDICKDMNKVYTSMGVCPQHDLLWGTLTGREHLLFYGRLKNIKGSALMQAVEESLKSVSLFDGGVADKPAGKYSGGMKRRLSVAISLIGNPKVVYMDEPSTGLDPASRKDLWTVIQRAKQNTAIILTTHSMEEAEFLCDRLGIFVDGGLQCVGNPKELKGRYGGSYVFTMTTSVEHEEKVERMVKHISPNSKRVYHLAGTQKFEIPKQEVMIADVFFMVEKVKSKFTVFAWGLADTTLEDVFFKVATTAQAFNSLS.

The next 7 helical transmembrane spans lie at 35–55, 320–340, 374–394, 406–426, 433–453, 465–485, and 507–527; these read VLVP…LDVV, IASM…FPVI, FLTL…AIGL, FIFY…ASSI, ATVV…FLFG, GILA…YEFA, and LFYL…SIDL. Position 555 is a phosphoserine (Ser-555). Residues 587–824 form the ABC transporter domain; it reads IVCDNLKKVY…YGGSYVFTMT (238 aa). 625–632 is a binding site for ATP; the sequence is GPNGAGKT.

It belongs to the ABC transporter superfamily. ABCA family. CPR flippase (TC 3.A.1.211) subfamily.

The protein localises to the membrane. This is ABC transporter A family member 10 (ABCA10) from Arabidopsis thaliana (Mouse-ear cress).